We begin with the raw amino-acid sequence, 250 residues long: Glycerol-1-phosphate phosphohydrolase 1 (250 aa).

Residue aspartate 18 is the Nucleophile of the active site. Residues aspartate 18 and aspartate 20 each coordinate Mg(2+). Catalysis depends on aspartate 20, which acts as the Proton donor. Lysine 64 participates in a covalent cross-link: Glycyl lysine isopeptide (Lys-Gly) (interchain with G-Cter in SUMO); alternate. A Glycyl lysine isopeptide (Lys-Gly) (interchain with G-Cter in ubiquitin); alternate cross-link involves residue lysine 64. Serine 90 bears the Phosphoserine mark. Residue lysine 144 forms a Glycyl lysine isopeptide (Lys-Gly) (interchain with G-Cter in ubiquitin) linkage. Aspartate 179 is a binding site for Mg(2+).

It belongs to the HAD-like hydrolase superfamily. DOG/GPP family. As to quaternary structure, monomer. It depends on Mg(2+) as a cofactor.

Its subcellular location is the cytoplasm. It localises to the nucleus. It carries out the reaction sn-glycerol 1-phosphate + H2O = glycerol + phosphate. It catalyses the reaction sn-glycerol 3-phosphate + H2O = glycerol + phosphate. Functionally, major isoform of glycerol-1-phosphate phosphohydrolase involved in glycerol biosynthesis. Plays a role in osmoadaptation and required for adaptation to anaerobic conditions. In Saccharomyces cerevisiae (strain ATCC 204508 / S288c) (Baker's yeast), this protein is Glycerol-1-phosphate phosphohydrolase 1.